The following is a 919-amino-acid chain: DNA double-strand break repair Rad50 ATPase (919 aa).

ATP is bound by residues 33-39 (NGAGKST) and Gln-143. Coiled-coil stretches lie at residues 208 to 268 (MTLR…MLVN), 315 to 379 (HEVA…RRYT), and 414 to 458 (ESVL…LEES). In terms of domain architecture, Zinc-hook spans 417 to 516 (LERLDAVIND…EASRLQDKRR (100 aa)). Cys-464 and Cys-467 together coordinate Zn(2+). 3 coiled-coil regions span residues 486-515 (EAERLRKAAKEKAAEAEKARAEASRLQDKR), 541-595 (EDLA…LQRL), and 635-749 (AYRS…RKAS).

This sequence belongs to the SMC family. RAD50 subfamily. Homodimer. Forms a heterotetramer composed of two Mre11 subunits and two Rad50 subunits. Requires Zn(2+) as cofactor.

Part of the Rad50/Mre11 complex, which is involved in the early steps of DNA double-strand break (DSB) repair. The complex may facilitate opening of the processed DNA ends to aid in the recruitment of HerA and NurA. Rad50 controls the balance between DNA end bridging and DNA resection via ATP-dependent structural rearrangements of the Rad50/Mre11 complex. In Aeropyrum pernix (strain ATCC 700893 / DSM 11879 / JCM 9820 / NBRC 100138 / K1), this protein is DNA double-strand break repair Rad50 ATPase.